The following is an 807-amino-acid chain: Tyrosine-protein kinase receptor torso (807 aa).

The signal sequence occupies residues 1–28 (MYSEGKLLKVFLIFAGFIIFSLCGEVVS). The Extracellular segment spans residues 29–370 (QRYPPAPGLL…RAFTPGMLRW (342 aa)). 4 disulfide bridges follow: Cys46–Cys61, Cys81–Cys203, Cys210–Cys239, and Cys259–Cys265. Residues Asn54, Asn171, Asn183, and Asn195 are each glycosylated (N-linked (GlcNAc...) asparagine). 3 N-linked (GlcNAc...) asparagine glycosylation sites follow: Asn307, Asn323, and Asn344. Residues 371-391 (VWAGATAGAGCAAGGLLAATL) traverse the membrane as a helical segment. Topologically, residues 392-807 (LCCGHRRATS…SPPVIQTKTA (416 aa)) are cytoplasmic. Residues 439–738 (VLLHEVIGEG…PTFPELHQKL (300 aa)) enclose the Protein kinase domain. ATP-binding positions include 445–453 (IGEGAFGVV) and Lys468. Asp607 acts as the Proton acceptor in catalysis.

It belongs to the protein kinase superfamily. Tyr protein kinase family. As to quaternary structure, homodimer; disulfide-linked. The cofactor is Mg(2+). Post-translationally, may be auto-phosphorylated on tyrosine residues. In terms of processing, at least one of the 3 cysteine residues Cys-381, Cys-393 or Cys-394 is involved in the formation of interchain disulfide bonds. The disulfide bond sites in the extracellular region are not involved in homodimer formation.

It is found in the cell membrane. It catalyses the reaction L-tyrosyl-[protein] + ATP = O-phospho-L-tyrosyl-[protein] + ADP + H(+). Functionally, probable receptor tyrosine kinase. During postembryonic development, involved in the initiation of metamorphosis probably by inducing the production of ecdysone in response to prothoracicotropic hormone (PTTH). Binding to PTTH stimulates activation of canonical MAPK signaling leading to ERK phosphorylation. This Bombyx mori (Silk moth) protein is Tyrosine-protein kinase receptor torso.